The sequence spans 420 residues: Glucose-1-phosphate adenylyltransferase (420 aa).

Residues tyrosine 108, glycine 173, 188 to 189 (EK), and serine 206 each bind alpha-D-glucose 1-phosphate.

This sequence belongs to the bacterial/plant glucose-1-phosphate adenylyltransferase family. As to quaternary structure, homotetramer.

It carries out the reaction alpha-D-glucose 1-phosphate + ATP + H(+) = ADP-alpha-D-glucose + diphosphate. It functions in the pathway glycan biosynthesis; glycogen biosynthesis. Functionally, involved in the biosynthesis of ADP-glucose, a building block required for the elongation reactions to produce glycogen. Catalyzes the reaction between ATP and alpha-D-glucose 1-phosphate (G1P) to produce pyrophosphate and ADP-Glc. This Paraburkholderia phytofirmans (strain DSM 17436 / LMG 22146 / PsJN) (Burkholderia phytofirmans) protein is Glucose-1-phosphate adenylyltransferase.